Reading from the N-terminus, the 101-residue chain is Therostasin (101 aa).

The N-terminal stretch at Met1 to Gly19 is a signal peptide. 2 Antistasin-like domains span residues Cys21 to Cys46 and Cys49 to Cys75.

In terms of tissue distribution, salivary glands.

It localises to the secreted. Functionally, potent inhibitor of factor Xa. It also inhibits trypsin in a weaker manner. The protein is Therostasin of Theromyzon tessulatum (Duck leech).